The following is a 238-amino-acid chain: Ribonuclease PH (238 aa).

Residues R86 and 124-126 (GTR) contribute to the phosphate site.

The protein belongs to the RNase PH family. In terms of assembly, homohexameric ring arranged as a trimer of dimers.

It catalyses the reaction tRNA(n+1) + phosphate = tRNA(n) + a ribonucleoside 5'-diphosphate. Its function is as follows. Phosphorolytic 3'-5' exoribonuclease that plays an important role in tRNA 3'-end maturation. Removes nucleotide residues following the 3'-CCA terminus of tRNAs; can also add nucleotides to the ends of RNA molecules by using nucleoside diphosphates as substrates, but this may not be physiologically important. Probably plays a role in initiation of 16S rRNA degradation (leading to ribosome degradation) during starvation. This Vibrio parahaemolyticus serotype O3:K6 (strain RIMD 2210633) protein is Ribonuclease PH.